We begin with the raw amino-acid sequence, 211 residues long: FMN-dependent NADH:quinone oxidoreductase 2 (211 aa).

FMN is bound by residues S10 and 17-19; that span reads SRS.

It belongs to the azoreductase type 1 family. In terms of assembly, homodimer. Requires FMN as cofactor.

It catalyses the reaction 2 a quinone + NADH + H(+) = 2 a 1,4-benzosemiquinone + NAD(+). It carries out the reaction N,N-dimethyl-1,4-phenylenediamine + anthranilate + 2 NAD(+) = 2-(4-dimethylaminophenyl)diazenylbenzoate + 2 NADH + 2 H(+). In terms of biological role, quinone reductase that provides resistance to thiol-specific stress caused by electrophilic quinones. Its function is as follows. Also exhibits azoreductase activity. Catalyzes the reductive cleavage of the azo bond in aromatic azo compounds to the corresponding amines. In Listeria monocytogenes serovar 1/2a (strain ATCC BAA-679 / EGD-e), this protein is FMN-dependent NADH:quinone oxidoreductase 2.